The following is a 675-amino-acid chain: TOM1-like protein 9 (675 aa).

The VHS domain maps to 9–138 (ATSEMLIGPD…ELLRAGAVFP (130 aa)). 5 disordered regions span residues 144–181 (SAPV…EPEF), 270–322 (LPGT…QLAL), 371–524 (FSDN…YAQM), 542–561 (QNGV…GYQP), and 622–675 (RDQT…AGTM). In terms of domain architecture, GAT spans 180–268 (EFPTLSLSEI…VLTNYEAIAS (89 aa)). Composition is skewed to polar residues over residues 299–317 (GDSS…NGVL) and 372–435 (SDNT…GQGV). The span at 436 to 451 (SSPWSSQPAQQPVQPS) shows a compositional bias: low complexity. Polar residues-rich tracts occupy residues 470–481 (QDYSPSAESGSP) and 488–524 (PTQT…YAQM). Basic and acidic residues predominate over residues 646 to 661 (NKPEDKLFGDLVDISK).

Belongs to the TOM1 family. Interacts with ELC/VPS23A and ELCL/VPS23B. As to expression, ubiquitously expressed.

The protein localises to the cytoplasm. It localises to the membrane. Might contribute to the loading of the ESCRT machinery. In Arabidopsis thaliana (Mouse-ear cress), this protein is TOM1-like protein 9.